The chain runs to 424 residues: Isoflavipucine cluster transcription factor ATEG_00326 (424 aa).

The zn(2)-C6 fungal-type DNA-binding region spans 10–38; sequence CDRCHGQKLRCIHSGGGPCVRCAKAKATC. Positions 265-286 are disordered; sequence ARMQTPEGTPERTSESSPSGPP.

The protein resides in the nucleus. In terms of biological role, transcription factor that regulates the expression of the gene cluster that mediates the biosynthesis of isoflavipucine. The protein is Isoflavipucine cluster transcription factor ATEG_00326 of Aspergillus terreus (strain NIH 2624 / FGSC A1156).